The sequence spans 580 residues: Tripeptidyl-peptidase sed5 (580 aa).

The segment at 1–21 (MYPLDGSARPHPPGTTRLNSV) is disordered. Residues 181 to 567 (RAQRLIVAEL…RRTLEELRRI (387 aa)) enclose the Peptidase S53 domain. N-linked (GlcNAc...) asparagine glycosylation is present at asparagine 236. Residues glutamate 269, aspartate 273, and serine 479 each act as charge relay system in the active site. Residues aspartate 523 and isoleucine 524 each contribute to the Ca(2+) site. An N-linked (GlcNAc...) asparagine glycan is attached at asparagine 529. Residues glycine 543, glycine 545, and aspartate 547 each contribute to the Ca(2+) site.

Ca(2+) serves as cofactor.

It localises to the secreted. It is found in the extracellular space. It carries out the reaction Release of an N-terminal tripeptide from a polypeptide.. Functionally, secreted tripeptidyl-peptidase which degrades proteins at acidic pHs and is involved in virulence. This Aspergillus fumigatus (strain ATCC MYA-4609 / CBS 101355 / FGSC A1100 / Af293) (Neosartorya fumigata) protein is Tripeptidyl-peptidase sed5 (sed5).